The sequence spans 172 residues: Adenine phosphoribosyltransferase (172 aa).

This sequence belongs to the purine/pyrimidine phosphoribosyltransferase family. In terms of assembly, homodimer.

The protein resides in the cytoplasm. The catalysed reaction is AMP + diphosphate = 5-phospho-alpha-D-ribose 1-diphosphate + adenine. It participates in purine metabolism; AMP biosynthesis via salvage pathway; AMP from adenine: step 1/1. Its function is as follows. Catalyzes a salvage reaction resulting in the formation of AMP, that is energically less costly than de novo synthesis. This Polynucleobacter necessarius subsp. necessarius (strain STIR1) protein is Adenine phosphoribosyltransferase.